Consider the following 1499-residue polypeptide: ABC multidrug transporter A-2 (1499 aa).

Disordered regions lie at residues 1–66 (MAMQ…IDQE) and 80–107 (QISQ…NSDK). Polar residues predominate over residues 16-30 (ISSSAGQEVASTIRR). Over residues 31–51 (QFTDADADRIVETPLGEKADS) the composition is skewed to basic and acidic residues. The span at 80 to 94 (QISQKSAGPTNTFLD) shows a compositional bias: polar residues. An ABC transporter 1 domain is found at 166-415 (LRSILGCRNR…FIDMGFDCPD (250 aa)). The N-linked (GlcNAc...) asparagine glycan is linked to asparagine 339. Helical transmembrane passes span 526–546 (MTLA…SVFY), 561–581 (LLFF…LTLW), 606–626 (MIVD…ILYF), 635–655 (GHFF…SNIF), and 669–689 (MVPS…TIPV). A glycan (N-linked (GlcNAc...) asparagine) is linked at asparagine 763. A helical transmembrane segment spans residues 778-798 (GIILGFFFFFLAAYIICSELV). The ABC transporter 2 domain maps to 857 to 1100 (FHWQDVCYDI…LIKYFENKGS (244 aa)). Residue 893-900 (GVTGAGKT) coordinates ATP. 5 consecutive transmembrane segments (helical) span residues 1193-1213 (YIYS…FTFW), 1227-1247 (FAIF…MPYF), 1268-1288 (AFML…AVPA), 1317-1337 (LLIL…IAGI), and 1353-1373 (LCLI…FWIF). Residue asparagine 1414 is glycosylated (N-linked (GlcNAc...) asparagine). A helical membrane pass occupies residues 1466 to 1486 (GLLFVYIVFNIFAAIFLYWLI).

Belongs to the ABC transporter superfamily. ABCG family. PDR (TC 3.A.1.205) subfamily.

It localises to the cell membrane. The catalysed reaction is itraconazole(in) + ATP + H2O = itraconazole(out) + ADP + phosphate + H(+). The enzyme catalyses voriconazole(in) + ATP + H2O = voriconazole(out) + ADP + phosphate + H(+). With respect to regulation, the efflux inhibitor FK506 impairs the transport activity. In terms of biological role, pleiotropic ABC efflux transporter that confers resistance to structurally and functionally unrelated compounds including azoles such as itraconazole, posaconazole, and voriconazole. This Aspergillus fumigatus (strain ATCC MYA-4609 / CBS 101355 / FGSC A1100 / Af293) (Neosartorya fumigata) protein is ABC multidrug transporter A-2.